A 335-amino-acid chain; its full sequence is Biotin synthase (335 aa).

One can recognise a Radical SAM core domain in the interval 46–274 (YKVQLASLFS…KSKIRLSAGR (229 aa)). Residues C61, C65, and C68 each contribute to the [4Fe-4S] cluster site. The [2Fe-2S] cluster site is built by C105, C137, C197, and R269.

This sequence belongs to the radical SAM superfamily. Biotin synthase family. In terms of assembly, homodimer. It depends on [4Fe-4S] cluster as a cofactor. Requires [2Fe-2S] cluster as cofactor.

It catalyses the reaction (4R,5S)-dethiobiotin + (sulfur carrier)-SH + 2 reduced [2Fe-2S]-[ferredoxin] + 2 S-adenosyl-L-methionine = (sulfur carrier)-H + biotin + 2 5'-deoxyadenosine + 2 L-methionine + 2 oxidized [2Fe-2S]-[ferredoxin]. Its pathway is cofactor biosynthesis; biotin biosynthesis; biotin from 7,8-diaminononanoate: step 2/2. In terms of biological role, catalyzes the conversion of dethiobiotin (DTB) to biotin by the insertion of a sulfur atom into dethiobiotin via a radical-based mechanism. The sequence is that of Biotin synthase from Prochlorococcus marinus (strain MIT 9515).